A 153-amino-acid chain; its full sequence is Hsp90 co-chaperone HCH1 (153 aa).

It belongs to the AHA1 family. As to quaternary structure, monomer. Interacts with HSP82.

The protein resides in the cytoplasm. The protein localises to the nucleus. In terms of biological role, co-chaperone that binds to the molecular chaperone HSP82 and stimulates its ATPase activity. Although not essential, it confers thermotolerance when intracellular levels of HSP82 are limiting. This is Hsp90 co-chaperone HCH1 (HCH1) from Saccharomyces cerevisiae (strain ATCC 204508 / S288c) (Baker's yeast).